We begin with the raw amino-acid sequence, 1364 residues long: MSTAMAMAAAASSSAAAATATTTAISNSTNTTASPATTNTINTTTKTITTSEVPLEPASNMAPKALEIEDSGRNEPEDLEHGAAKPLEQRKTTVVHTCPRPPGGYKYSMEFLYGIGSGMAGIPLNIPTPSSITPRTVRSTAPLLTTHMPLLTNMGVAPSRPSGIRYPGSAGGSNGTTVAASTTPSTTVTTSSGSPGSGAEAITSSVSSSGLPAAGLQAAQFICQGYMPTGPQRRLWHAENAVWQFDRNYPYNQAYSPPYGIPMMPVGFEHPYGQRIIYPGYYNQTPPGINPAAVAGLTRTNRPVTQQPHILTQPAVGTTESSEEAPATLGNAPQVSSTWRYGRPGTHRGRHAVPTAAAPALLHRDSKSFYNSIGSGMANGPRFKAPFVANVRNFQAGAVATVAAGGAATTAVVGTSAPATGAASSSDQNVATKRNHQGAATQNNHRNRHNAKKGGKNSVGKELTSNSSESLSNSSSKSQLNKRPSSSSSISPIKHPHRNYRNRMRYTATEPTEQKAATTTVPISNYQPPQQSTSTVRRTSKFQGSNAYQAHTAAGRQQSRFYQSRHMDGYVFQSGHYMVYAAGAPPVGLRPGKSPVSEATGAPPGAAAATAAAATAVAATAAAAEGGGAAEGGGAAAAPVTASSATLEGEQPLDSDFDQRQEFADLGLDPANGGFSSDLEPNGIKQDTSELDTHSCLISHPNSEVDGDDNQSLASFAPSVESDDSDSELSDASVESVARDILVSCLAVATGAEEPDFSGPNLVPYGDMHYLKELDKKNPPTNGYRSHRPYHQSHYAYHSQMSPRGLSCCGDMLNQHSEDLVFKLDQNQPDGIESGKNIFLREITEQPDNISVASNLSCSPSASSSKSVLAPMASKSNITMPEENNDDDELPLVVHNRYWREFFGYTPADRFLLRAKFVEMRRPPKVMGCKNKWDPLSLSVWKKFLESQQTRHVYKIKMRLWRAIYTVAMKNYPRYGLYLVGSSISYFGSKCSDMDICMLACTNPNIDSRMEAVYHLHVMKELLGRTNMFQDFNLIEARVPILRFTDRCHKVEVDINFNNSVGIRNTHLLYCYSQLDWRVRPMALTVKQWAQYHNINNAKNMTISSYSLMLMVIHFLQVGASPPVLPCLHNLYPEKFGLLQPNDFGYVDMNEVMAPYQSDNSQTLGDLLLSFLHYYSVFDYGKYAISIRVGGVLPIEVCRAATAPKNDIHQWNELCIEEPFDQTNTARSVYDTDTFERIKTIFVASYRRLDSTRNLSAIFEDYDGPTILMQQPSVDSEIELYEGQHHRLLPNRGSSRSNSAIPSPRPSILMVDKATTAIWDDINNKPDHPVLSHSNNYDATNECTGNGSLMGLKDNSVADKPPIA.

A compositionally biased stretch (low complexity) spans 27–51 (NSTNTTASPATTNTINTTTKTITTS). Disordered stretches follow at residues 27–97 (NSTN…VVHT), 159–203 (SRPS…EAIT), 315–338 (AVGT…VSST), 417–535 (APAT…STST), and 666–732 (LGLD…LSDA). Residues 66–91 (LEIEDSGRNEPEDLEHGAAKPLEQRK) show a composition bias toward basic and acidic residues. Residues 175–198 (GTTVAASTTPSTTVTTSSGSPGSG) show a composition bias toward low complexity. The segment covering 417–426 (APATGAASSS) has biased composition (low complexity). Polar residues predominate over residues 427 to 444 (DQNVATKRNHQGAATQNN). Residues 445–455 (HRNRHNAKKGG) show a composition bias toward basic residues. Over residues 461-493 (KELTSNSSESLSNSSSKSQLNKRPSSSSSISPI) the composition is skewed to low complexity. Basic residues predominate over residues 494–504 (KHPHRNYRNRM). Over residues 509–535 (TEPTEQKAATTTVPISNYQPPQQSTST) the composition is skewed to polar residues. 2 residues coordinate Mg(2+): aspartate 993 and aspartate 995. A PAP-associated domain is found at 1163–1224 (TLGDLLLSFL…CIEEPFDQTN (62 aa)).

It belongs to the DNA polymerase type-B-like family. GLD2 subfamily. In terms of assembly, interacts with Fmr1 and eIF-4E. Mg(2+) is required as a cofactor. It depends on Mn(2+) as a cofactor. As to expression, expressed in the brain.

Its subcellular location is the cytoplasm. It localises to the nucleus. It carries out the reaction RNA(n) + ATP = RNA(n)-3'-adenine ribonucleotide + diphosphate. Functionally, cytoplasmic poly(A) RNA polymerase that adds successive AMP monomers to the 3'-end of specific RNAs, forming a poly(A) tail. In contrast to the canonical nuclear poly(A) RNA polymerase, it only adds poly(A) to selected cytoplasmic mRNAs. Required for formation of long term memory. This Drosophila melanogaster (Fruit fly) protein is Poly(A) RNA polymerase gld-2 homolog A (Gld2).